A 301-amino-acid polypeptide reads, in one-letter code: F1 operon positive regulatory protein (301 aa).

One can recognise an HTH araC/xylS-type domain in the interval 8–107 (NSIIQYIEEN…GYTPRQYRMI (100 aa)). 2 DNA-binding regions (H-T-H motif) span residues 26–47 (DCLVLYSGFSRRYLQISFKEYV) and 74–97 (IIEISAKLFYDSQQTFTREFKKIF).

Positive regulator of F1 operon expression. The protein is F1 operon positive regulatory protein (caf1R) of Yersinia pestis.